The following is a 391-amino-acid chain: Steroid 3-ketoacyl-CoA thiolase (391 aa).

Catalysis depends on Cys-93, which acts as the Acyl-thioester intermediate. Residues Gln-151, 221–223 (RET), and Ser-246 each bind CoA. Active-site proton acceptor residues include His-347 and Cys-377. A substrate-binding site is contributed by Gly-379.

This sequence belongs to the thiolase-like superfamily. Thiolase family. Dimer of dimers.

The catalysed reaction is an acyl-CoA + acetyl-CoA = a 3-oxoacyl-CoA + CoA. It carries out the reaction 3-oxochol-4-en-22-oyl-CoA + acetyl-CoA = 3,22-dioxochol-4-en-24-oyl-CoA + CoA. It participates in steroid metabolism; cholesterol degradation. In terms of biological role, involved in the beta-oxidation of the cholesterol side chain. It is important for utilization of cholesterol as a sole carbon source in vitro and for full virulence in the chronic stage of mouse lung infection. Catalyzes the thiolysis of 3,22-dioxochol-4-en-24-oyl-CoA to yield 3-oxo-4-pregnene-20-carboxyl-CoA (3-OPC-CoA) and acetyl-CoA. Also able to use acetoacetyl-CoA (AcAcCoA) as substrate. In Mycobacterium tuberculosis (strain ATCC 25618 / H37Rv), this protein is Steroid 3-ketoacyl-CoA thiolase (fadA5).